Reading from the N-terminus, the 318-residue chain is Ornithine carbamoyltransferase (318 aa).

Carbamoyl phosphate-binding positions include 63–66 (STRT), glutamine 90, arginine 114, and 141–144 (HPCQ). L-ornithine contacts are provided by residues asparagine 172, aspartate 235, and 239–240 (SM). Residues 275 to 276 (CL) and arginine 303 each bind carbamoyl phosphate.

The protein belongs to the aspartate/ornithine carbamoyltransferase superfamily. OTCase family.

It is found in the cytoplasm. It carries out the reaction carbamoyl phosphate + L-ornithine = L-citrulline + phosphate + H(+). It participates in amino-acid biosynthesis; L-arginine biosynthesis; L-arginine from L-ornithine and carbamoyl phosphate: step 1/3. In terms of biological role, reversibly catalyzes the transfer of the carbamoyl group from carbamoyl phosphate (CP) to the N(epsilon) atom of ornithine (ORN) to produce L-citrulline. In Prochlorococcus marinus (strain SARG / CCMP1375 / SS120), this protein is Ornithine carbamoyltransferase.